The primary structure comprises 265 residues: Neuronal membrane glycoprotein M6-b (265 aa).

A helical transmembrane segment spans residues 31–51 (GGVPYASLVATILCFSGVALF). Asn73 is a glycosylation site (N-linked (GlcNAc...) asparagine). Helical transmembrane passes span 90–110 (VIYGIASFFFLYGIILLAEGF) and 136–156 (FVFLTYVLGVAWLGVFGFSAV). An N-linked (GlcNAc...) asparagine glycan is attached at Asn177. A helical transmembrane segment spans residues 224–244 (LFIVACAGAGATVIALLIYMM). Ser257 bears the Phosphoserine mark.

This sequence belongs to the myelin proteolipid protein family. Interacts with SERT. As to expression, highly expressed in the ventral medullary surface, moderately in the cerebral cortex and cerebellum, poorly in lung and kidney, and not at all in heart, skeletal muscle, liver, stomach or stomach.

The protein resides in the membrane. Its subcellular location is the cell membrane. May be involved in neural development. Involved in regulation of osteoblast function and bone formation. Involved in matrix vesicle release by osteoblasts; this function seems to involve maintenance of the actin cytoskeleton. May be involved in cellular trafficking of SERT and thereby in regulation of serotonin uptake. This Rattus norvegicus (Rat) protein is Neuronal membrane glycoprotein M6-b (Gpm6b).